A 902-amino-acid polypeptide reads, in one-letter code: Adhesion G-protein coupled receptor D1 (902 aa).

An N-terminal signal peptide occupies residues 1–25 (MKKLLPLCCWHSWLLLFYCDFQVRG). Topologically, residues 26-598 (AHTRSHVHPG…GHQVALSSIS (573 aa)) are extracellular. Residues asparagine 68, asparagine 76, asparagine 83, asparagine 89, asparagine 121, asparagine 183, asparagine 217, asparagine 310, asparagine 330, asparagine 337, asparagine 347, asparagine 422, asparagine 504, asparagine 529, and asparagine 561 are each glycosylated (N-linked (GlcNAc...) asparagine). The 194-residue stretch at 111–304 (KGVTFLYYRK…VNTMAPTNAY (194 aa)) folds into the Pentraxin (PTX) domain. The GAIN-B domain maps to 399-585 (QVAIVGSSSM…AILMQVVPLE (187 aa)). 2 disulfide bridges follow: cysteine 538/cysteine 567 and cysteine 555/cysteine 569. A GPS region spans residues 538–585 (CAFLDFSSGEGIWSNQGCALTEGNLSYSICRCTHLTNFAILMQVVPLE). Positions 574–582 (NFAILMQVV) are stachel. Glutamine 591 provides a ligand contact to 17beta-hydroxy-5alpha-androstan-3-one. Residues 599–619 (YIGCSLSVLCLAITLVTFAVL) form a helical membrane-spanning segment. Residues 620–630 (SSVSTIRNQRY) are Cytoplasmic-facing. Residues 631-651 (HIHANLSCAVLVAQVLLLISF) form a helical membrane-spanning segment. Residues 652-661 (RFEPGTAPCQ) lie on the Extracellular side of the membrane. A disulfide bridge connects residues cysteine 660 and cysteine 732. Residues 662–682 (VLAMLLHYFFLSAFAWMLVEG) traverse the membrane as a helical segment. Topologically, residues 683 to 702 (LHLYSMVIKVFGSEDSKHRY) are cytoplasmic. The helical transmembrane segment at 703 to 723 (YYGIGWGFPLLICIISIVFAM) threads the bilayer. Residues 724-739 (DSYGTSKNCWLSLGNG) lie on the Extracellular side of the membrane. The helical transmembrane segment at 740 to 760 (AIWAFVAPALFIIVVNIGILI) threads the bilayer. At 761–788 (AVTRVISQISAENYKIHGDPSAFKLTAK) the chain is on the cytoplasmic side. Residues 789-809 (AVAVLLPILGTSWVFGVLAVN) form a helical membrane-spanning segment. At 810–812 (NQA) the chain is on the extracellular side. A helical transmembrane segment spans residues 813–833 (MVFQYMFAILNSLQGFFIFLF). Residues 834–902 (HCLLNSEVRA…SGHRVDLSAV (69 aa)) are Cytoplasmic-facing. The segment at 865–902 (KPFSSDIMNGTRPATGSTRLSPWDKSSHSGHRVDLSAV) is disordered. Over residues 870–884 (DIMNGTRPATGSTRL) the composition is skewed to polar residues. Basic and acidic residues predominate over residues 889-902 (KSSHSGHRVDLSAV).

Belongs to the G-protein coupled receptor 2 family. Adhesion G-protein coupled receptor (ADGR) subfamily. In terms of assembly, heterodimer of 2 chains generated by proteolytic processing; the large extracellular N-terminal fragment and the membrane-bound C-terminal fragment predominantly remain associated and non-covalently linked. Interacts with ESYT1; interaction takes place in absence of cytosolic calcium and inhibits the G protein-coupled receptor activity of ADGRD1. In terms of processing, autoproteolytically processed at the GPS region of the GAIN-B domain; this cleavage modulates receptor activity. Cleavage takes place early in the secretory pathway before N-glycosylation.

The protein localises to the cell membrane. Forms a heterodimer of 2 chains generated by proteolytic processing that remain associated through non-covalent interactions mediated by the GAIN-B domain. In the inactivated receptor, the Stachel sequence (also named stalk) is embedded in the GAIN-B domain, where it adopts a beta-strand conformation. On activation, the Stachel moves into the 7 transmembrane region and adopts a twisted hook-shaped configuration that forms contacts within the receptor, leading to coupling of a G-alpha protein, which activates signaling. The cleaved GAIN-B and N-terminal domains can then dissociate from the rest of the receptor. Interaction with ESYT1 in absence of cytosolic calcium inhibits the G protein-coupled receptor activity; interaction and inhibition is relieved when cytosolic calcium increases. Functionally, adhesion G-protein coupled receptor (aGPCR) for androgen hormone 5alpha-dihydrotestosterone (5alpha-DHT), also named 17beta-hydroxy-5alpha-androstan-3-one, the most potent hormone among androgens. Also activated by methenolone drug. Ligand binding causes a conformation change that triggers signaling via guanine nucleotide-binding proteins (G proteins) and modulates the activity of downstream effectors, such as adenylate cyclase. ADGRD1 is coupled to G(s) G proteins and mediates activation of adenylate cyclase activity. Acts as a 5alpha-DHT receptor in muscle cells, thereby increasing intracellular cyclic AMP (cAMP) levels and enhancing muscle strength. This chain is Adhesion G-protein coupled receptor D1 (ADGRD1), found in Bos taurus (Bovine).